Reading from the N-terminus, the 301-residue chain is Small ribosomal subunit biogenesis GTPase RsgA (301 aa).

The CP-type G domain maps to 63-224 (INALVRPPIA…IADTPGFSSY (162 aa)). Residues 112–115 (SKAD) and 167–175 (GQTGAGKST) each bind GTP. Zn(2+) is bound by residues Cys-248, Cys-253, His-255, and Cys-261.

Belongs to the TRAFAC class YlqF/YawG GTPase family. RsgA subfamily. Monomer. Associates with 30S ribosomal subunit, binds 16S rRNA. Zn(2+) is required as a cofactor.

It is found in the cytoplasm. One of several proteins that assist in the late maturation steps of the functional core of the 30S ribosomal subunit. Helps release RbfA from mature subunits. May play a role in the assembly of ribosomal proteins into the subunit. Circularly permuted GTPase that catalyzes slow GTP hydrolysis, GTPase activity is stimulated by the 30S ribosomal subunit. The chain is Small ribosomal subunit biogenesis GTPase RsgA from Leuconostoc citreum (strain KM20).